We begin with the raw amino-acid sequence, 349 residues long: Terpene cyclase janA (349 aa).

The N-linked (GlcNAc...) asparagine glycan is linked to Asn80. Transmembrane regions (helical) follow at residues 81–101, 116–136, 155–175, 189–209, 223–243, and 308–328; these read LSLYGVAFASALVPMWLVIVL, LAFLAGPLVQCLGPGLVIPAI, IGFYPSSMIIGYILPLILAAL, LIAVWQGWPVYTSLIMLIIHY, IACAFAFACSTAGHLAFLWFA, and VILIFGMAGVVFLGPCSVALL.

It belongs to the membrane-bound ascI terpene cyclase family.

The protein resides in the membrane. Its pathway is secondary metabolite biosynthesis. Functionally, part of the gene cluster that mediates the biosynthesis of the indole diterpenes janthitremanes such as shearinine K or shearinine A. The geranylgeranyl diphosphate (GGPP) synthase janG catalyzes the first step in janthitremane biosynthesis via conversion of farnesyl pyrophosphate and isopentyl pyrophosphate into geranylgeranyl pyrophosphate (GGPP). Condensation of indole-3-glycerol phosphate with GGPP by the prenyl transferase janC then forms 3-geranylgeranylindole (3-GGI). Epoxidation by the FAD-dependent monooxygenase janM leads to a epoxidized-GGI that is substrate of the terpene cyclase janB for cyclization to yield paspaline. Paspaline is subsequently converted to 13-desoxypaspaline by the cytochrome P450 monooxygenase janP, via beta-PC-M6 in a series of alpha-face oxidations. The cytochrome P450 monooxygenase janQ is proposed to carry out sequential beta-face oxidation steps at C-7 and C-13 of 13-desoxypaspaline to form paspalicine and paspalinine respectively. The indole diterpene prenyltransferase janD may then convert paspalinine into shearinine K which is substrate of janO and/or additional enzymes for oxidation and cyclization to generate shearinine A. This is Terpene cyclase janA from Penicillium janthinellum (Penicillium vitale).